Consider the following 412-residue polypeptide: Probable beta-1,4-xylosyltransferase IRX10 (412 aa).

The helical; Signal-anchor for type II membrane protein transmembrane segment at 1 to 21 (MKIHSCLSAILLFLFFSASSA) threads the bilayer. The Lumenal portion of the chain corresponds to 22-412 (KQNVRTERIS…AGPVADLKPW (391 aa)). Asn-139 and Asn-400 each carry an N-linked (GlcNAc...) asparagine glycan.

This sequence belongs to the glycosyltransferase 47 family. In terms of tissue distribution, limited to xylem cells. Expressed in the root tip, xylem cells of roots, and in the vasculature of roots, cotyledons and leaves.

The protein resides in the golgi apparatus membrane. Involved in the synthesis of the hemicellulose glucuronoxylan, a major component of secondary cell walls. Probably involved in the elongation of glucuronoxylan xylosyl backbone, especially in the formation of GlcUA side chain of xylans. The polypeptide is Probable beta-1,4-xylosyltransferase IRX10 (IRX10) (Arabidopsis thaliana (Mouse-ear cress)).